The primary structure comprises 230 residues: Large ribosomal subunit protein uL1 (230 aa).

This sequence belongs to the universal ribosomal protein uL1 family. In terms of assembly, part of the 50S ribosomal subunit.

Its function is as follows. Binds directly to 23S rRNA. The L1 stalk is quite mobile in the ribosome, and is involved in E site tRNA release. Protein L1 is also a translational repressor protein, it controls the translation of the L11 operon by binding to its mRNA. The polypeptide is Large ribosomal subunit protein uL1 (Staphylococcus aureus (strain N315)).